Reading from the N-terminus, the 962-residue chain is Leucine--tRNA ligase (962 aa).

Residues 40 to 51 (PYPSGAGLHVGH) carry the 'HIGH' region motif. A 'KMSKS' region motif is present at residues 737–741 (KMSKS). K740 provides a ligand contact to ATP.

This sequence belongs to the class-I aminoacyl-tRNA synthetase family.

It localises to the cytoplasm. The catalysed reaction is tRNA(Leu) + L-leucine + ATP = L-leucyl-tRNA(Leu) + AMP + diphosphate. This chain is Leucine--tRNA ligase, found in Flavobacterium psychrophilum (strain ATCC 49511 / DSM 21280 / CIP 103535 / JIP02/86).